Reading from the N-terminus, the 393-residue chain is NAD(P)H-quinone oxidoreductase subunit H, chloroplastic (393 aa).

The protein belongs to the complex I 49 kDa subunit family. NDH is composed of at least 16 different subunits, 5 of which are encoded in the nucleus.

The protein localises to the plastid. Its subcellular location is the chloroplast thylakoid membrane. It catalyses the reaction a plastoquinone + NADH + (n+1) H(+)(in) = a plastoquinol + NAD(+) + n H(+)(out). The enzyme catalyses a plastoquinone + NADPH + (n+1) H(+)(in) = a plastoquinol + NADP(+) + n H(+)(out). NDH shuttles electrons from NAD(P)H:plastoquinone, via FMN and iron-sulfur (Fe-S) centers, to quinones in the photosynthetic chain and possibly in a chloroplast respiratory chain. The immediate electron acceptor for the enzyme in this species is believed to be plastoquinone. Couples the redox reaction to proton translocation, and thus conserves the redox energy in a proton gradient. The chain is NAD(P)H-quinone oxidoreductase subunit H, chloroplastic from Olimarabidopsis pumila (Dwarf rocket).